Reading from the N-terminus, the 88-residue chain is Small ribosomal subunit protein bS20 (88 aa).

The tract at residues 1 to 23 (MANTSSAKKATRKIARRAAINKN) is disordered.

It belongs to the bacterial ribosomal protein bS20 family.

Binds directly to 16S ribosomal RNA. This is Small ribosomal subunit protein bS20 from Mesorhizobium japonicum (strain LMG 29417 / CECT 9101 / MAFF 303099) (Mesorhizobium loti (strain MAFF 303099)).